The primary structure comprises 404 residues: Probable tRNA sulfurtransferase (404 aa).

Positions 60 to 165 (EPVAEALKNV…DEAAYISHEE (106 aa)) constitute a THUMP domain. ATP-binding positions include 183–184 (ML), 208–209 (HF), Arg-265, Gly-287, and Gln-296.

It belongs to the ThiI family.

The protein resides in the cytoplasm. It carries out the reaction [ThiI sulfur-carrier protein]-S-sulfanyl-L-cysteine + a uridine in tRNA + 2 reduced [2Fe-2S]-[ferredoxin] + ATP + H(+) = [ThiI sulfur-carrier protein]-L-cysteine + a 4-thiouridine in tRNA + 2 oxidized [2Fe-2S]-[ferredoxin] + AMP + diphosphate. The enzyme catalyses [ThiS sulfur-carrier protein]-C-terminal Gly-Gly-AMP + S-sulfanyl-L-cysteinyl-[cysteine desulfurase] + AH2 = [ThiS sulfur-carrier protein]-C-terminal-Gly-aminoethanethioate + L-cysteinyl-[cysteine desulfurase] + A + AMP + 2 H(+). It participates in cofactor biosynthesis; thiamine diphosphate biosynthesis. Its function is as follows. Catalyzes the ATP-dependent transfer of a sulfur to tRNA to produce 4-thiouridine in position 8 of tRNAs, which functions as a near-UV photosensor. Also catalyzes the transfer of sulfur to the sulfur carrier protein ThiS, forming ThiS-thiocarboxylate. This is a step in the synthesis of thiazole, in the thiamine biosynthesis pathway. The sulfur is donated as persulfide by IscS. In Streptococcus uberis (strain ATCC BAA-854 / 0140J), this protein is Probable tRNA sulfurtransferase.